Reading from the N-terminus, the 395-residue chain is Cytochrome b561 and DOMON domain-containing protein At5g47530 (395 aa).

Positions 1 to 24 (MAISSNLLLCLSLFIFIITKSALA) are cleaved as a signal peptide. In terms of domain architecture, DOMON spans 47–162 (LDSFLHYTYD…GIINTVWQDG (116 aa)). The 196-residue stretch at 176 to 371 (GNNVRSVSTL…LEGFTWYVVI (196 aa)) folds into the Cytochrome b561 domain. Transmembrane regions (helical) follow at residues 210–230 (IHGILNGVSWGIMMPIGAIIA) and 242–262 (AWFYLHVFCQSSAYIIGVAGW). Heme b is bound by residues histidine 211, histidine 247, and histidine 280. Residues 282-302 (AVGIALFCLATIQVFAMFLRP) form a helical membrane-spanning segment. A heme b-binding site is contributed by histidine 316. 2 consecutive transmembrane segments (helical) span residues 318 to 338 (TVGYSVIILAVVNVFKGLDIL) and 351 to 371 (IIVVLGIVAVVLEGFTWYVVI).

It depends on heme b as a cofactor.

It is found in the membrane. Its function is as follows. May act as a catecholamine-responsive trans-membrane electron transporter. This chain is Cytochrome b561 and DOMON domain-containing protein At5g47530, found in Arabidopsis thaliana (Mouse-ear cress).